The primary structure comprises 551 residues: Probable glucomannan 4-beta-mannosyltransferase 3 (551 aa).

The helical transmembrane segment at Ala-60 to Phe-80 threads the bilayer. The active site involves Asp-154. Substrate is bound by residues Asp-213 and Asp-215. Asp-307 is a catalytic residue. 4 helical membrane-spanning segments follow: residues Val-386–Ile-406, Val-409–Ile-429, Ile-504–Tyr-524, and Tyr-525–Gly-545.

The protein belongs to the glycosyltransferase 2 family. Plant cellulose synthase-like A subfamily.

The protein localises to the golgi apparatus membrane. It carries out the reaction GDP-mannose + (glucomannan)n = GDP + (glucomannan)n+1.. Functionally, probable mannan synthase which consists of a 4-beta-mannosyltransferase activity on mannan using GDP-mannose. The beta-1,4-mannan product is the backbone for galactomannan synthesis by galactomannan galactosyltransferase. Galactomannan is a noncellulosic polysaccharides of plant cell wall. The polypeptide is Probable glucomannan 4-beta-mannosyltransferase 3 (Oryza sativa subsp. japonica (Rice)).